A 274-amino-acid polypeptide reads, in one-letter code: Cyclase-like protein 1 (274 aa).

The N-terminal stretch at 1–18 (MAASRLALLLLVLAVAAA) is a signal peptide.

Belongs to the Cyclase 1 superfamily. As to expression, highly expressed in leaf sheaths. Expressed in leaf collars.

It is found in the secreted. Its subcellular location is the extracellular space. The protein resides in the extracellular matrix. Functionally, may be involved in response to stresses. This Oryza sativa subsp. japonica (Rice) protein is Cyclase-like protein 1.